A 361-amino-acid polypeptide reads, in one-letter code: Uroporphyrinogen decarboxylase (361 aa).

Residues 44–48, Asp-93, Tyr-168, Ser-223, and His-337 each bind substrate; that span reads RQAGR.

It belongs to the uroporphyrinogen decarboxylase family. Homodimer.

The protein resides in the cytoplasm. It catalyses the reaction uroporphyrinogen III + 4 H(+) = coproporphyrinogen III + 4 CO2. It participates in porphyrin-containing compound metabolism; protoporphyrin-IX biosynthesis; coproporphyrinogen-III from 5-aminolevulinate: step 4/4. Functionally, catalyzes the decarboxylation of four acetate groups of uroporphyrinogen-III to yield coproporphyrinogen-III. In Thermobifida fusca (strain YX), this protein is Uroporphyrinogen decarboxylase.